The sequence spans 258 residues: Imidazole glycerol phosphate synthase subunit HisF (258 aa).

Catalysis depends on residues Asp11 and Asp130.

It belongs to the HisA/HisF family. In terms of assembly, heterodimer of HisH and HisF.

The protein resides in the cytoplasm. It catalyses the reaction 5-[(5-phospho-1-deoxy-D-ribulos-1-ylimino)methylamino]-1-(5-phospho-beta-D-ribosyl)imidazole-4-carboxamide + L-glutamine = D-erythro-1-(imidazol-4-yl)glycerol 3-phosphate + 5-amino-1-(5-phospho-beta-D-ribosyl)imidazole-4-carboxamide + L-glutamate + H(+). It functions in the pathway amino-acid biosynthesis; L-histidine biosynthesis; L-histidine from 5-phospho-alpha-D-ribose 1-diphosphate: step 5/9. In terms of biological role, IGPS catalyzes the conversion of PRFAR and glutamine to IGP, AICAR and glutamate. The HisF subunit catalyzes the cyclization activity that produces IGP and AICAR from PRFAR using the ammonia provided by the HisH subunit. This is Imidazole glycerol phosphate synthase subunit HisF from Xanthomonas euvesicatoria pv. vesicatoria (strain 85-10) (Xanthomonas campestris pv. vesicatoria).